Here is a 210-residue protein sequence, read N- to C-terminus: Thymidylate kinase (210 aa).

11-18 (GGEGAGKT) contacts ATP.

It belongs to the thymidylate kinase family.

The catalysed reaction is dTMP + ATP = dTDP + ADP. Its function is as follows. Phosphorylation of dTMP to form dTDP in both de novo and salvage pathways of dTTP synthesis. The chain is Thymidylate kinase (tmk) from Halalkalibacterium halodurans (strain ATCC BAA-125 / DSM 18197 / FERM 7344 / JCM 9153 / C-125) (Bacillus halodurans).